Reading from the N-terminus, the 230-residue chain is N-(5'-phosphoribosyl)anthranilate isomerase (230 aa).

Belongs to the TrpF family.

The enzyme catalyses N-(5-phospho-beta-D-ribosyl)anthranilate = 1-(2-carboxyphenylamino)-1-deoxy-D-ribulose 5-phosphate. It participates in amino-acid biosynthesis; L-tryptophan biosynthesis; L-tryptophan from chorismate: step 3/5. The protein is N-(5'-phosphoribosyl)anthranilate isomerase of Trichodesmium erythraeum (strain IMS101).